A 606-amino-acid chain; its full sequence is RUN and FYVE domain-containing protein 2 (606 aa).

Positions 37-169 (DSDYPPLQQF…IDANLCVKGE (133 aa)) constitute an RUN domain. Positions 210–534 (EELNRQLNST…IKEANKALQG (325 aa)) form a coiled coil. The segment at 540–598 (DKEATHCKLCEKEFSLSKRKHHCRNCGEIFCNACSDNELPLPSSPKPVRVCDSCHALLI) adopts an FYVE-type zinc-finger fold. Zn(2+) contacts are provided by Cys546, Cys549, Cys562, Cys565, Cys570, Cys573, Cys590, and Cys593.

In terms of assembly, interacts with BMX. In terms of tissue distribution, expressed in brain, lung and testis.

The protein resides in the nucleus. The protein is RUN and FYVE domain-containing protein 2 (RUFY2) of Homo sapiens (Human).